The following is a 115-amino-acid chain: Cyclin-dependent protein kinase inhibitor SMR3 (115 aa).

The segment covering 17 to 36 (KIRLPTRPELDIPDSDHEDP) has biased composition (basic and acidic residues). The disordered stretch occupies residues 17-82 (KIRLPTRPEL…RSSGTKRKLT (66 aa)). Over residues 67–81 (RKPKPNRSSGTKRKL) the composition is skewed to basic residues.

As to quaternary structure, interacts with CDKA-1 and D-type cyclins. Expressed at low levels in roots and stems.

The protein resides in the nucleus. Probable cyclin-dependent protein kinase (CDK) inhibitor that functions as a repressor of mitosis in the endoreduplication cell cycle. The protein is Cyclin-dependent protein kinase inhibitor SMR3 of Arabidopsis thaliana (Mouse-ear cress).